The primary structure comprises 509 residues: Glycerol kinase (509 aa).

T17 serves as a coordination point for ADP. Positions 17, 18, and 19 each coordinate ATP. T17 is a sn-glycerol 3-phosphate binding site. R21 lines the ADP pocket. Positions 87, 88, 139, and 256 each coordinate sn-glycerol 3-phosphate. The glycerol site is built by R87, E88, Y139, D256, and Q257. ADP-binding residues include T278 and G322. Residues T278, G322, Q326, and A423 each contribute to the ATP site. ADP-binding residues include A423 and N427.

Belongs to the FGGY kinase family.

The catalysed reaction is glycerol + ATP = sn-glycerol 3-phosphate + ADP + H(+). Its pathway is polyol metabolism; glycerol degradation via glycerol kinase pathway; sn-glycerol 3-phosphate from glycerol: step 1/1. Its activity is regulated as follows. Inhibited by fructose 1,6-bisphosphate (FBP). In terms of biological role, key enzyme in the regulation of glycerol uptake and metabolism. Catalyzes the phosphorylation of glycerol to yield sn-glycerol 3-phosphate. The sequence is that of Glycerol kinase from Corynebacterium glutamicum (strain R).